Here is a 631-residue protein sequence, read N- to C-terminus: Phosphomethylpyrimidine synthase (631 aa).

Residues Asn239, Met268, Tyr297, His333, 353–355 (SRG), 394–397 (DGLR), and Glu433 contribute to the substrate site. Zn(2+) is bound at residue His437. A substrate-binding site is contributed by Tyr460. Residue His501 participates in Zn(2+) binding. Cys581, Cys584, and Cys589 together coordinate [4Fe-4S] cluster.

It belongs to the ThiC family. Homodimer. It depends on [4Fe-4S] cluster as a cofactor.

It catalyses the reaction 5-amino-1-(5-phospho-beta-D-ribosyl)imidazole + S-adenosyl-L-methionine = 4-amino-2-methyl-5-(phosphooxymethyl)pyrimidine + CO + 5'-deoxyadenosine + formate + L-methionine + 3 H(+). The protein operates within cofactor biosynthesis; thiamine diphosphate biosynthesis. Functionally, catalyzes the synthesis of the hydroxymethylpyrimidine phosphate (HMP-P) moiety of thiamine from aminoimidazole ribotide (AIR) in a radical S-adenosyl-L-methionine (SAM)-dependent reaction. In Escherichia coli (strain 55989 / EAEC), this protein is Phosphomethylpyrimidine synthase.